The chain runs to 477 residues: ATP synthase subunit beta (477 aa).

Gly163 to Thr170 provides a ligand contact to ATP.

Belongs to the ATPase alpha/beta chains family. As to quaternary structure, F-type ATPases have 2 components, CF(1) - the catalytic core - and CF(0) - the membrane proton channel. CF(1) has five subunits: alpha(3), beta(3), gamma(1), delta(1), epsilon(1). CF(0) has four main subunits: a(1), b(1), b'(1) and c(9-12).

It localises to the cellular thylakoid membrane. The enzyme catalyses ATP + H2O + 4 H(+)(in) = ADP + phosphate + 5 H(+)(out). Produces ATP from ADP in the presence of a proton gradient across the membrane. The catalytic sites are hosted primarily by the beta subunits. The chain is ATP synthase subunit beta from Synechococcus sp. (strain JA-3-3Ab) (Cyanobacteria bacterium Yellowstone A-Prime).